The sequence spans 248 residues: 4-hydroxy-tetrahydrodipicolinate reductase (248 aa).

NAD(+) is bound by residues Asp32, 74-76 (GTT), and 99-102 (SANF). Catalysis depends on His134, which acts as the Proton donor/acceptor. His135 is a (S)-2,3,4,5-tetrahydrodipicolinate binding site. Lys138 acts as the Proton donor in catalysis. Residue 144–145 (GT) coordinates (S)-2,3,4,5-tetrahydrodipicolinate.

It belongs to the DapB family.

Its subcellular location is the cytoplasm. It catalyses the reaction (S)-2,3,4,5-tetrahydrodipicolinate + NAD(+) + H2O = (2S,4S)-4-hydroxy-2,3,4,5-tetrahydrodipicolinate + NADH + H(+). It carries out the reaction (S)-2,3,4,5-tetrahydrodipicolinate + NADP(+) + H2O = (2S,4S)-4-hydroxy-2,3,4,5-tetrahydrodipicolinate + NADPH + H(+). It functions in the pathway amino-acid biosynthesis; L-lysine biosynthesis via DAP pathway; (S)-tetrahydrodipicolinate from L-aspartate: step 4/4. Its function is as follows. Catalyzes the conversion of 4-hydroxy-tetrahydrodipicolinate (HTPA) to tetrahydrodipicolinate. This chain is 4-hydroxy-tetrahydrodipicolinate reductase, found in Pelodictyon phaeoclathratiforme (strain DSM 5477 / BU-1).